The primary structure comprises 179 residues: MEGEELIYHNIINEILVGYIKYYMNDISEHELSPYQQQIKKILTYYDECLNKQVTITFSLTNAQEIKTQFTGVVTELFKDLINWGRICGFIVFSARMAKYCKDANNHLESTVITTAYNFMKHNLLPWMISHGGQEEFLAFSLHSDIYSVIFNIKYFLSKFCNHMFLRSCVQLLRNCNLI.

A BH1 motif is present at residues 76–95 (ELFKDLINWGRICGFIVFSA). The BH2 motif lies at 126–141 (PWMISHGGQEEFLAFS).

It belongs to the Bcl-2 family. In terms of assembly, interacts with host BECN1 (via BH3 homology domain); this interaction allows the virus to inhibit BECN1, and thus autophagy. Interacts with host BID. Interacts with host BAX.

Its subcellular location is the host mitochondrion. The protein resides in the host endoplasmic reticulum. Its function is as follows. Suppresses apoptosis in host cell to promote the viral replication. Has the ability to potentially bind to all the members of the proapoptotic Bcl-2 family. Inhibits autophagy by interacting with host Beclin 1 (BECN1). The sequence is that of Apoptosis regulator Bcl-2 homolog from Ornithodoros (relapsing fever ticks).